The chain runs to 1455 residues: DNA polymerase II large subunit (1455 aa).

The disordered stretch occupies residues 1409–1440 (GLLENLSNGSKKTEKAEKAEKPRKKSDEKPKK). Basic and acidic residues predominate over residues 1419 to 1438 (KKTEKAEKAEKPRKKSDEKP).

It belongs to the archaeal DNA polymerase II family. Heterodimer of a large subunit and a small subunit. In terms of processing, this protein undergoes a protein self splicing that involves a post-translational excision of the intervening region (intein) followed by peptide ligation.

The enzyme catalyses DNA(n) + a 2'-deoxyribonucleoside 5'-triphosphate = DNA(n+1) + diphosphate. It carries out the reaction Exonucleolytic cleavage in the 3'- to 5'-direction to yield nucleoside 5'-phosphates.. In terms of biological role, possesses two activities: a DNA synthesis (polymerase) and an exonucleolytic activity that degrades single-stranded DNA in the 3'- to 5'-direction. Has a template-primer preference which is characteristic of a replicative DNA polymerase. The polypeptide is DNA polymerase II large subunit (polC) (Pyrococcus abyssi (strain GE5 / Orsay)).